The sequence spans 736 residues: Segment polarity protein dishevelled homolog DVL-2 (736 aa).

Residues 11–93 (VGETKVIYHL…RVVSWLVSSD (83 aa)) enclose the DIX domain. Residues 93-255 (DTPQPEVAPP…RMERTSSFSS (163 aa)) are disordered. The segment covering 111–122 (VPPPPPLPPLPP) has biased composition (pro residues). Residues 159 to 171 (LRRDRPRRRDSSE) are compositionally biased toward basic and acidic residues. Over residues 193–208 (ESSSTLMTSELESTSL) the composition is skewed to low complexity. The residue at position 211 (S211) is a Phosphoserine. Residues 218-230 (SRFSSSTEQSSAS) are compositionally biased toward polar residues. Basic residues predominate over residues 232–244 (LLKRHRRRRKQRP). Residues 267–339 (TVTLNMEKYN…NDDAVRVLRD (73 aa)) form the PDZ domain. Residues 433 to 507 (PESGLEVRDR…SEQCYYVFGD (75 aa)) form the DEP domain. Positions 558–568 (PHPYSPQPPPY) are enriched in pro residues. Residues 558-665 (PHPYSPQPPP…PNLRALPGLH (108 aa)) are disordered. 2 stretches are compositionally biased toward low complexity: residues 581–598 (ASSQ…TRSD) and 614–629 (SKSG…SRGG).

The protein belongs to the DSH family. As to quaternary structure, interacts through its PDZ domain with the C-terminal regions of VANGL1 and VANGL2. Interacts with Rac. Interacts with ARRB1; the interaction is enhanced by phosphorylation of DVL1. Can form large oligomers (via DIX domain). Interacts (via DIX domain) with DIXDC1 (via DIX domain). Interacts (via DEP domain) with AP2M1 and the AP-2 complex. Interacts with FAM105B/otulin. Interacts with DCDC2. Interacts (when phosphorylated) with FOXK1 and FOXK2; the interaction induces DVL2 nuclear translocation. Interacts with MAPK15. Interacts with PKD1 (via extracellular domain). Interacts with LMBR1L. Phosphorylated by CSNK1D. WNT3A induces DVL2 phosphorylation by CSNK1E and MARK kinases. In terms of processing, ubiquitinated via 'Lys-63'-linked polyubiquitin chains; leading to its autophagy-mediated degradation. Ubiquitous.

The protein resides in the cell membrane. The protein localises to the cytoplasm. It is found in the cytosol. Its subcellular location is the cytoplasmic vesicle. It localises to the nucleus. In terms of biological role, plays a role in the signal transduction pathways mediated by multiple Wnt genes. Participates both in canonical and non-canonical Wnt signaling by binding to the cytoplasmic C-terminus of frizzled family members and transducing the Wnt signal to down-stream effectors. Promotes internalization and degradation of frizzled proteins upon Wnt signaling. The polypeptide is Segment polarity protein dishevelled homolog DVL-2 (Dvl2) (Mus musculus (Mouse)).